We begin with the raw amino-acid sequence, 398 residues long: Serine/threonine-protein phosphatase 4 regulatory subunit 2-B (398 aa).

The segment at 138–398 (SSEKNTSPSL…NAPEEPMEQD (261 aa)) is disordered. Composition is skewed to polar residues over residues 139–149 (SEKNTSPSLNR), 156–170 (PSNS…NVNG), and 183–193 (TLSSPMNTNGL). Over residues 197–211 (MENKESDLQQKEKSL) the composition is skewed to basic and acidic residues. The segment covering 278 to 294 (ASTSADKGKESCQTAQT) has biased composition (polar residues). Low complexity predominate over residues 338–366 (SESACSLNSEEPNSAAAAASTAGTDSSEG).

Belongs to the PPP4R2 family. Serine/threonine-protein phosphatase 4 (PP4) occurs in different assemblies of the catalytic and one or more regulatory subunits.

Regulatory subunit of serine/threonine-protein phosphatase 4 (PP4). This Xenopus laevis (African clawed frog) protein is Serine/threonine-protein phosphatase 4 regulatory subunit 2-B (ppp4r2-b).